Reading from the N-terminus, the 96-residue chain is Putative septation protein SpoVG (96 aa).

This sequence belongs to the SpoVG family.

Its function is as follows. Could be involved in septation. This chain is Putative septation protein SpoVG, found in Clostridium kluyveri (strain ATCC 8527 / DSM 555 / NBRC 12016 / NCIMB 10680 / K1).